The sequence spans 248 residues: Metallo-beta-lactamase type 2 (248 aa).

The N-terminal stretch at 1 to 21 (MKRLKGLLVLALGFTGLQVFG) is a signal peptide. 5 residues coordinate Zn(2+): histidine 97, histidine 99, aspartate 101, histidine 160, and cysteine 179. Residue lysine 182 participates in substrate binding. Histidine 221 is a binding site for Zn(2+).

This sequence belongs to the metallo-beta-lactamase superfamily. Class-B beta-lactamase family. As to quaternary structure, monomer. Zn(2+) serves as cofactor.

It is found in the periplasm. The catalysed reaction is a beta-lactam + H2O = a substituted beta-amino acid. Confers resistance to the different beta-lactams antibiotics (penicillin, cephalosporin and carbapenem) via the hydrolysis of the beta-lactam ring. The chain is Metallo-beta-lactamase type 2 (blaB6) from Elizabethkingia meningoseptica (Chryseobacterium meningosepticum).